The sequence spans 198 residues: C4b-binding protein beta chain (198 aa).

The N-terminal stretch at 1–17 (MFFWLMCYLVDVWLISA) is a signal peptide. The Sushi 1; atypical; lacks a Cys domain maps to 22 to 77 (HCPDPLLVTDEFSSLEPVNVNDTFMFKCNEHCIFKGSNWSQCRENHTRVTHSPVSK). N-linked (GlcNAc...) asparagine glycosylation is found at Asn-42, Asn-59, and Asn-66. Residues 79 to 135 (RDCGPPETPTHGYFEGRDFKSGSTITYYCEARYRLVGTQHQQCIDGEWTSAPPICEL) enclose the Sushi 2 domain. 2 disulfide bridges follow: Cys-81/Cys-121 and Cys-107/Cys-133.

As to quaternary structure, disulfide-linked complex of alpha and beta chains.

The protein resides in the secreted. Its function is as follows. Controls the classical pathway of complement activation. It binds as a cofactor to C3b/C4b inactivator (C3bINA), which then hydrolyzes the complement fragment C4b. It also accelerates the degradation of the C4bC2a complex (C3 convertase) by dissociating the complement fragment C2a. It also interacts with serum amyloid P component. The chain is C4b-binding protein beta chain (C4BPB) from Bos taurus (Bovine).